The following is a 228-amino-acid chain: MEQEICVISFSGGQDSTTLAVWAKKRFKKVCLVGFDYAQKHSVELECAQKIASLLQLPYEIISLDFLENITRSALFKNSNDLMGHSHAQNKDLPNSFVPNRNAIFITLLHSYAQKIGASNIALGVSQADFSGYPDCKEDFIKSIEHALNLGSNTAIKILTPLMFLNKAQEFQMAKDLGVLDLVIKETHTCYQGERRILHAYGYGCGECPACQLRKKGYEEFQAKALFQ.

ATP is bound at residue 10–20 (FSGGQDSTTLA). Cysteine 190, cysteine 205, cysteine 208, and cysteine 211 together coordinate Zn(2+).

Belongs to the QueC family. It depends on Zn(2+) as a cofactor.

The catalysed reaction is 7-carboxy-7-deazaguanine + NH4(+) + ATP = 7-cyano-7-deazaguanine + ADP + phosphate + H2O + H(+). It participates in purine metabolism; 7-cyano-7-deazaguanine biosynthesis. Catalyzes the ATP-dependent conversion of 7-carboxy-7-deazaguanine (CDG) to 7-cyano-7-deazaguanine (preQ(0)). This chain is 7-cyano-7-deazaguanine synthase, found in Helicobacter pylori (strain P12).